Consider the following 179-residue polypeptide: Orotate phosphoribosyltransferase (179 aa).

5-phospho-alpha-D-ribose 1-diphosphate is bound by residues arginine 94, lysine 95, lysine 98, histidine 100, and 120–128 (EDTSTTGAS). Residues threonine 124 and arginine 152 each coordinate orotate.

Belongs to the purine/pyrimidine phosphoribosyltransferase family. PyrE subfamily. As to quaternary structure, homodimer. Mg(2+) serves as cofactor.

It catalyses the reaction orotidine 5'-phosphate + diphosphate = orotate + 5-phospho-alpha-D-ribose 1-diphosphate. Its pathway is pyrimidine metabolism; UMP biosynthesis via de novo pathway; UMP from orotate: step 1/2. In terms of biological role, catalyzes the transfer of a ribosyl phosphate group from 5-phosphoribose 1-diphosphate to orotate, leading to the formation of orotidine monophosphate (OMP). In Mycobacterium leprae (strain TN), this protein is Orotate phosphoribosyltransferase.